The primary structure comprises 576 residues: Probable vesicular glutamate transporter eat-4 (576 aa).

At 1–69 (MSSWNEAWDR…QTWIGKCRKR (69 aa)) the chain is on the cytoplasmic side. A disordered region spans residues 25-46 (AAASATGAAPPQQMQEEGNENP). A compositionally biased stretch (polar residues) spans 36–46 (QQMQEEGNENP). The helical transmembrane segment at 70 to 90 (WLLAILANMGFMISFGIRCNF) threads the bilayer. The Extracellular segment spans residues 91–121 (GAAKTHMYKNYTDPYGKVHMHEFNWTIDELS). Asn100 and Asn114 each carry an N-linked (GlcNAc...) asparagine glycan. A helical transmembrane segment spans residues 122 to 142 (VMESSYFYGYLVTQIPAGFLA). The Cytoplasmic portion of the chain corresponds to 143–150 (AKFPPNKL). The chain crosses the membrane as a helical span at residues 151–171 (FGFGIGVGAFLNILLPYGFKV). The Extracellular segment spans residues 172 to 174 (KSD). A helical transmembrane segment spans residues 175–195 (YLVAFIQITQGLVQGVCYPAM). At 196–213 (HGVWRYWAPPMERSKLAT) the chain is on the cytoplasmic side. The helical transmembrane segment at 214–234 (TAFTGSYAGAVLGLPLSAFLV) threads the bilayer. The Extracellular segment spans residues 235–239 (SYVSW). Residues 240 to 260 (AAPFYLYGVCGVIWAILWFCV) traverse the membrane as a helical segment. Over 261–305 (TFEKPAFHPTISQEEKIFIEDAIGHVSNTHPTIRSIPWKAIVTSK) the chain is Cytoplasmic. Residues 306–325 (PVWAIIVANFARSWTFYLLL) form a helical membrane-spanning segment. The Extracellular portion of the chain corresponds to 326–344 (QNQLTYMKEALGMKIADSG). Residues 345–365 (LLAAIPHLVMGCVVLMGGQLA) form a helical membrane-spanning segment. Residues 366 to 381 (DYLRSNKILSTTAVRK) are Cytoplasmic-facing. A helical membrane pass occupies residues 382 to 402 (IFNCGGFGGEAAFMLIVAYTT). Residues 403 to 406 (SDTT) lie on the Extracellular side of the membrane. A helical transmembrane segment spans residues 407–427 (AIMALIAAVGMSGFAISGFNV). Residues 428-437 (NHLDIAPRYA) are Cytoplasmic-facing. A helical membrane pass occupies residues 438–458 (AILMGFSNGIGTLAGLTCPFV). Residues 459–471 (TEAFTAHSKHGWT) are Extracellular-facing. The helical transmembrane segment at 472 to 492 (SVFLLASLIHFTGVTFYAVYA) threads the bilayer. Residues 493–576 (SGELQEWAEP…VVENPHYQQW (84 aa)) are Cytoplasmic-facing.

The protein belongs to the major facilitator superfamily. Sodium/anion cotransporter family. VGLUT subfamily. In terms of tissue distribution, expressed in neurons of the pharynx and the extrapharyngeal nervous system. Highly expressed in male PHC sensory neurons.

It localises to the cell membrane. It is found in the synapse. In terms of biological role, required for glutamatergic synaptic transmission. In AWB and AWC sensory neurons, required for the detection of preferred food sources, probably via glutamatergic neurotransmission from sensory neurons. Negatively regulates the turning step of male mating behavior. This chain is Probable vesicular glutamate transporter eat-4, found in Caenorhabditis elegans.